The following is a 139-amino-acid chain: Putative nickel-responsive regulator (139 aa).

Positions 79, 90, 92, and 98 each coordinate Ni(2+).

This sequence belongs to the transcriptional regulatory CopG/NikR family. It depends on Ni(2+) as a cofactor.

Functionally, transcriptional regulator. This Lawsonia intracellularis (strain PHE/MN1-00) protein is Putative nickel-responsive regulator.